The primary structure comprises 465 residues: Ribulose bisphosphate carboxylase large chain (465 aa).

The residue at position 4 (Lys4) is an N6,N6,N6-trimethyllysine. Substrate-binding residues include Asn113 and Thr163. The active-site Proton acceptor is the Lys165. Lys167 contacts substrate. 3 residues coordinate Mg(2+): Lys191, Asp193, and Glu194. Residue Lys191 is modified to N6-carboxylysine. The active-site Proton acceptor is His284. Positions 285, 317, and 369 each coordinate substrate.

Belongs to the RuBisCO large chain family. Type I subfamily. Heterohexadecamer of 8 large chains and 8 small chains; disulfide-linked. The disulfide link is formed within the large subunit homodimers. The cofactor is Mg(2+). The disulfide bond which can form in the large chain dimeric partners within the hexadecamer appears to be associated with oxidative stress and protein turnover.

Its subcellular location is the plastid. It localises to the chloroplast. The enzyme catalyses 2 (2R)-3-phosphoglycerate + 2 H(+) = D-ribulose 1,5-bisphosphate + CO2 + H2O. It carries out the reaction D-ribulose 1,5-bisphosphate + O2 = 2-phosphoglycolate + (2R)-3-phosphoglycerate + 2 H(+). Its function is as follows. RuBisCO catalyzes two reactions: the carboxylation of D-ribulose 1,5-bisphosphate, the primary event in carbon dioxide fixation, as well as the oxidative fragmentation of the pentose substrate in the photorespiration process. Both reactions occur simultaneously and in competition at the same active site. The chain is Ribulose bisphosphate carboxylase large chain from Hamamelis mollis (Chinese witch hazel).